The sequence spans 730 residues: Elongation factor 2 (730 aa).

Residues 19 to 260 (QRIRNIGIVA…MVIHFLPNPL (242 aa)) form the tr-type G domain. GTP contacts are provided by residues 28-35 (AHIDHGKT), 94-98 (DTPGH), and 148-151 (NKVD). His596 carries the post-translational modification Diphthamide.

The protein belongs to the TRAFAC class translation factor GTPase superfamily. Classic translation factor GTPase family. EF-G/EF-2 subfamily.

It localises to the cytoplasm. Catalyzes the GTP-dependent ribosomal translocation step during translation elongation. During this step, the ribosome changes from the pre-translocational (PRE) to the post-translocational (POST) state as the newly formed A-site-bound peptidyl-tRNA and P-site-bound deacylated tRNA move to the P and E sites, respectively. Catalyzes the coordinated movement of the two tRNA molecules, the mRNA and conformational changes in the ribosome. In Methanosarcina mazei (strain ATCC BAA-159 / DSM 3647 / Goe1 / Go1 / JCM 11833 / OCM 88) (Methanosarcina frisia), this protein is Elongation factor 2.